A 282-amino-acid polypeptide reads, in one-letter code: MGRQPCCDKVGLKKGPWTAEEDRKLINFILTNGQCCWRAVPKLSGLLRCGKSCRLRWTNYLRPDLKRGLLSDYEEKMVIDLHSQLGNRWSKIASHLPGRTDNEIKNHWNTHIKKKLRKMGIDPLTHKPLSIVEKEDEEPLKKLQNNTVPFQETMERPLENNIKNISRLEESLGDDQFMEINLEYGVEDVPLIETESLDLICSNSTMSSSTSTSSHSSNDSSFLKDLQFPEFEWSDYGNSNNDNNNGVDNIIENNMMSLWEISDFSSLDLLLNDESSSTFGLF.

HTH myb-type domains are found at residues 9–61 (KVGL…TNYL) and 62–116 (RPDL…KKKL). DNA-binding regions (H-T-H motif) lie at residues 37–61 (WRAV…TNYL) and 89–112 (WSKI…NTHI).

As to expression, expressed in chalaza of mature seeds, cotyledons, rosette leaves, cauline leaves, veins of stems, mature siliques, sepals and styles. Expressed at low levels in roots.

It localises to the nucleus. Its function is as follows. Transcription factor that acts as a positive regulator of abscisic acid (ABA) signaling in response to salt stress. Acts as a negative regulator ABI1, ABI2 and PP2CA, which are protein phosphatases 2C acting as negative regulator of ABA signaling. Binds to the DNA specific sequence and core element 5'-ACGT-3' found in the promoters of ABI1 and PP2CA to negatively regulate their expression during ABA-dependent salt stress response. The sequence is that of Transcription factor MYB20 from Arabidopsis thaliana (Mouse-ear cress).